Consider the following 170-residue polypeptide: Calcineurin subunit B type 1 (170 aa).

4 consecutive EF-hand domains span residues 18–46, 50–85, 87–122, and 128–163; these read DEIR…FMSL, QQNP…FSVR, DKLS…MVGN, and QLQQ…TDIH. Residues Asp-31, Asp-33, Ser-35, Glu-42, Asp-63, Asp-65, Asn-67, Glu-69, Glu-74, Asp-100, Asp-102, Asp-104, Tyr-106, Glu-111, Asp-141, Asp-143, Asp-145, Lys-147, and Glu-152 each contribute to the Ca(2+) site.

This sequence belongs to the calcineurin regulatory subunit family. Composed of two components (A and B), the A component is the catalytic subunit and the B component confers calcium sensitivity.

Its function is as follows. Calcineurin is a calcium-binding and calmodulin-binding protein found in all cells from yeast to mammals, and a calcium-dependent, calmodulin-stimulated protein phosphatase. This Drosophila melanogaster (Fruit fly) protein is Calcineurin subunit B type 1 (CanB).